We begin with the raw amino-acid sequence, 296 residues long: tRNA dimethylallyltransferase (296 aa).

11–18 (GPTAVGKT) is an ATP binding site. A substrate-binding site is contributed by 13 to 18 (TAVGKT). Positions 36–39 (DSQQ) are interaction with substrate tRNA.

Belongs to the IPP transferase family. As to quaternary structure, monomer. The cofactor is Mg(2+).

The catalysed reaction is adenosine(37) in tRNA + dimethylallyl diphosphate = N(6)-dimethylallyladenosine(37) in tRNA + diphosphate. Its function is as follows. Catalyzes the transfer of a dimethylallyl group onto the adenine at position 37 in tRNAs that read codons beginning with uridine, leading to the formation of N6-(dimethylallyl)adenosine (i(6)A). The protein is tRNA dimethylallyltransferase of Streptococcus equi subsp. zooepidemicus (strain H70).